The primary structure comprises 599 residues: Aspartate--tRNA(Asp/Asn) ligase (599 aa).

Position 172 (Glu-172) interacts with L-aspartate. The interval 196-199 (QLFK) is aspartate. Residue Arg-218 participates in L-aspartate binding. ATP-binding positions include 218–220 (RDE) and Gln-227. His-451 lines the L-aspartate pocket. Residue Glu-485 participates in ATP binding. Arg-492 is an L-aspartate binding site. 537-540 (GLDR) provides a ligand contact to ATP.

This sequence belongs to the class-II aminoacyl-tRNA synthetase family. Type 1 subfamily. Homodimer.

Its subcellular location is the cytoplasm. It carries out the reaction tRNA(Asx) + L-aspartate + ATP = L-aspartyl-tRNA(Asx) + AMP + diphosphate. Its function is as follows. Aspartyl-tRNA synthetase with relaxed tRNA specificity since it is able to aspartylate not only its cognate tRNA(Asp) but also tRNA(Asn). Reaction proceeds in two steps: L-aspartate is first activated by ATP to form Asp-AMP and then transferred to the acceptor end of tRNA(Asp/Asn). The protein is Aspartate--tRNA(Asp/Asn) ligase of Aromatoleum aromaticum (strain DSM 19018 / LMG 30748 / EbN1) (Azoarcus sp. (strain EbN1)).